The sequence spans 395 residues: D-alanine--D-alanine ligase (395 aa).

Positions 172-391 (KVVLGAAGIP…YTELITRLIE (220 aa)) constitute an ATP-grasp domain. 204-266 (DAGLTYPLFI…EQGIDGREIE (63 aa)) contacts ATP. Asp345, Glu358, and Asn360 together coordinate Mg(2+).

The protein belongs to the D-alanine--D-alanine ligase family. Mg(2+) is required as a cofactor. Mn(2+) serves as cofactor.

The protein localises to the cytoplasm. The catalysed reaction is 2 D-alanine + ATP = D-alanyl-D-alanine + ADP + phosphate + H(+). The protein operates within cell wall biogenesis; peptidoglycan biosynthesis. Functionally, cell wall formation. In Bifidobacterium longum subsp. infantis (strain ATCC 15697 / DSM 20088 / JCM 1222 / NCTC 11817 / S12), this protein is D-alanine--D-alanine ligase.